Consider the following 365-residue polypeptide: tRNA/tmRNA (uracil-C(5))-methyltransferase (365 aa).

Q189, Y217, N222, E238, and D298 together coordinate S-adenosyl-L-methionine. The active-site Nucleophile is C323. Residue E357 is the Proton acceptor of the active site.

Belongs to the class I-like SAM-binding methyltransferase superfamily. RNA M5U methyltransferase family. TrmA subfamily.

The catalysed reaction is uridine(54) in tRNA + S-adenosyl-L-methionine = 5-methyluridine(54) in tRNA + S-adenosyl-L-homocysteine + H(+). The enzyme catalyses uridine(341) in tmRNA + S-adenosyl-L-methionine = 5-methyluridine(341) in tmRNA + S-adenosyl-L-homocysteine + H(+). Functionally, dual-specificity methyltransferase that catalyzes the formation of 5-methyluridine at position 54 (m5U54) in all tRNAs, and that of position 341 (m5U341) in tmRNA (transfer-mRNA). This is tRNA/tmRNA (uracil-C(5))-methyltransferase from Shewanella woodyi (strain ATCC 51908 / MS32).